The following is a 461-amino-acid chain: Bacterial E1-like protein BilD (461 aa).

Cys385 serves as the catalytic Glycyl thioester intermediate.

In terms of biological role, component of the Bil (bacterial ISG15-like) antiviral defense system, composed of BilA, BilB, BilC and BilD. The Bil system specifically conjugates a ubiquitin-like moiety (bilA) to the bacteriophage central tail fiber (CTF, or tip attachment protein J) via reactions involving E1 (bilD) and E2 (bilB). Modifies CTF of phage SECphi27 and SECphi4, which probably interferes with assembly of the phage tail. Also modifies T5 baseplate hub protein pb3 (gene D16), but not gp27 of phage T6 (Bil defends against T6). BilD (E1) catalyzes the first step in conjugation. Activates ubiquitin-like BilA by first adenylating its C-terminal glycine residue with ATP, and then conjugates it to the side chain of a cysteine residue in E1 (this protein), yielding a ubiquitin-E1 thioester and free AMP. Bil-encoding bacteria produce mostly defective phage SECphi27, many of which have phage assembly defects, including no tails. SECphi27 phage progeny produced in E.coli with the Bil system inject less DNA into naive host cells, maybe because the phage are less able to adsorb and inject their DNA into host cells. Its function is as follows. Expression of the Bil system in E.coli (strain MG1655) confers about 100-fold resistance to phage SECphi27, SECphi18, SECphi6, SECphi4 and T5, but not to SECphi17. When cells expressing the Bil system are infected by phage SECphi27 at low multiplicity of infection (0.03 MOI) the culture survives, at 3.0 MOI the culture collapses at the same time as cells without the Bil system. The sequence is that of Bacterial E1-like protein BilD from Collimonas sp. (strain OK412).